The primary structure comprises 198 residues: Ribonuclease HII (198 aa).

The RNase H type-2 domain occupies 10–198 (QLVAGVDEVG…PVKRALGLAS (189 aa)). A divalent metal cation contacts are provided by aspartate 16, glutamate 17, and aspartate 108.

This sequence belongs to the RNase HII family. It depends on Mn(2+) as a cofactor. Mg(2+) serves as cofactor.

It is found in the cytoplasm. It carries out the reaction Endonucleolytic cleavage to 5'-phosphomonoester.. Functionally, endonuclease that specifically degrades the RNA of RNA-DNA hybrids. This Escherichia coli O81 (strain ED1a) protein is Ribonuclease HII.